A 660-amino-acid polypeptide reads, in one-letter code: Probable Xaa-Pro aminopeptidase PTRG_10574 (660 aa).

Mn(2+)-binding residues include aspartate 274, aspartate 285, glutamate 435, and glutamate 476. A disordered region spans residues 641–660 (SAGSGSTPLWKPHNKQDKKN).

The protein belongs to the peptidase M24B family. It depends on Mn(2+) as a cofactor.

It carries out the reaction Release of any N-terminal amino acid, including proline, that is linked to proline, even from a dipeptide or tripeptide.. Its function is as follows. Catalyzes the removal of a penultimate prolyl residue from the N-termini of peptides. The sequence is that of Probable Xaa-Pro aminopeptidase PTRG_10574 from Pyrenophora tritici-repentis (strain Pt-1C-BFP) (Wheat tan spot fungus).